The sequence spans 183 residues: Orotate phosphoribosyltransferase (183 aa).

5-phospho-alpha-D-ribose 1-diphosphate is bound by residues arginine 90, lysine 91, lysine 94, and 115 to 123; that span reads DDVATTGGS. Residues threonine 119 and arginine 147 each coordinate orotate.

This sequence belongs to the purine/pyrimidine phosphoribosyltransferase family. PyrE subfamily. In terms of assembly, homodimer. The cofactor is Mg(2+).

The enzyme catalyses orotidine 5'-phosphate + diphosphate = orotate + 5-phospho-alpha-D-ribose 1-diphosphate. The protein operates within pyrimidine metabolism; UMP biosynthesis via de novo pathway; UMP from orotate: step 1/2. In terms of biological role, catalyzes the transfer of a ribosyl phosphate group from 5-phosphoribose 1-diphosphate to orotate, leading to the formation of orotidine monophosphate (OMP). The chain is Orotate phosphoribosyltransferase from Methanopyrus kandleri (strain AV19 / DSM 6324 / JCM 9639 / NBRC 100938).